The chain runs to 152 residues: Transcriptional regulator MraZ (152 aa).

2 consecutive SpoVT-AbrB domains span residues 5–52 (ASAV…PLNQ) and 81–124 (ATEC…SESE).

This sequence belongs to the MraZ family. Forms oligomers.

It is found in the cytoplasm. The protein resides in the nucleoid. In Histophilus somni (strain 129Pt) (Haemophilus somnus), this protein is Transcriptional regulator MraZ.